Reading from the N-terminus, the 266-residue chain is Vitamin B12-binding protein (266 aa).

The signal sequence occupies residues 1 to 22 (MAKSLFRALVALSFLAPLWLNA). Positions 25 to 266 (RVITLSPANT…QLCNALSQVD (242 aa)) constitute a Fe/B12 periplasmic-binding domain. Cyanocob(III)alamin contacts are provided by residues Tyr-50 and 242–246 (DWFER). Cys-183 and Cys-259 are joined by a disulfide.

Belongs to the BtuF family. The complex is composed of two ATP-binding proteins (BtuD), two transmembrane proteins (BtuC) and a solute-binding protein (BtuF).

It localises to the periplasm. Part of the ABC transporter complex BtuCDF involved in vitamin B12 import. Binds vitamin B12 and delivers it to the periplasmic surface of BtuC. This is Vitamin B12-binding protein (btuF) from Escherichia coli (strain K12).